Consider the following 440-residue polypeptide: Gap junction alpha-8 protein (440 aa).

Residues Gly-2–Glu-12 lie within the membrane without spanning it. Topologically, residues Glu-13 to Ile-21 are cytoplasmic. Residues Gly-22–Glu-42 form a helical membrane-spanning segment. Residues Phe-43 to Pro-71 lie on the Extracellular side of the membrane. Disulfide bonds link Cys-54–Cys-201, Cys-61–Cys-195, and Cys-65–Cys-190. The chain crosses the membrane as a helical span at residues Ile-72–Tyr-92. Over Val-93–His-161 the chain is Cytoplasmic. Residues Glu-108–Gly-144 form a disordered region. The chain crosses the membrane as a helical span at residues Ile-162–Phe-182. Residues Arg-183–Thr-210 are Extracellular-facing. A helical transmembrane segment spans residues Ile-211–Met-231. The Cytoplasmic portion of the chain corresponds to Ser-232–Val-440. The segment at Gly-334–Val-440 is disordered. Composition is skewed to basic and acidic residues over residues Val-353 to Thr-365 and Glu-375 to Pro-405. Low complexity predominate over residues Leu-423–Arg-432.

Belongs to the connexin family. Alpha-type (group II) subfamily. In terms of assembly, a hemichannel or connexon is composed of a hexamer of connexins. A functional gap junction is formed by the apposition of two hemichannels. Forms heteromeric channels with GJA3. Detected in eye lens (at protein level). Eye lens.

It is found in the cell membrane. It localises to the cell junction. The protein localises to the gap junction. In terms of biological role, structural component of eye lens gap junctions. Gap junctions are dodecameric channels that connect the cytoplasm of adjoining cells. They are formed by the docking of two hexameric hemichannels, one from each cell membrane. Small molecules and ions diffuse from one cell to a neighboring cell via the central pore. In Ovis aries (Sheep), this protein is Gap junction alpha-8 protein (GJA8).